Here is a 662-residue protein sequence, read N- to C-terminus: UvrABC system protein B (662 aa).

The Helicase ATP-binding domain occupies 31–188 (DNIEGGEKAQ…NDLVDIQFER (158 aa)). 44–51 (GATGTGKT) provides a ligand contact to ATP. Positions 97-120 (YYDYYQPEAYVPSSDTYIEKDSSV) match the Beta-hairpin motif. The region spanning 435-601 (QIDDLLGEIN…TIKKEIRDLI (167 aa)) is the Helicase C-terminal domain. In terms of domain architecture, UVR spans 626-661 (KELVKKLEKQMQEAVEVLDFELAAQIRDMMLEVKAL).

Belongs to the UvrB family. In terms of assembly, forms a heterotetramer with UvrA during the search for lesions. Interacts with UvrC in an incision complex.

Its subcellular location is the cytoplasm. Its function is as follows. The UvrABC repair system catalyzes the recognition and processing of DNA lesions. A damage recognition complex composed of 2 UvrA and 2 UvrB subunits scans DNA for abnormalities. Upon binding of the UvrA(2)B(2) complex to a putative damaged site, the DNA wraps around one UvrB monomer. DNA wrap is dependent on ATP binding by UvrB and probably causes local melting of the DNA helix, facilitating insertion of UvrB beta-hairpin between the DNA strands. Then UvrB probes one DNA strand for the presence of a lesion. If a lesion is found the UvrA subunits dissociate and the UvrB-DNA preincision complex is formed. This complex is subsequently bound by UvrC and the second UvrB is released. If no lesion is found, the DNA wraps around the other UvrB subunit that will check the other stand for damage. This chain is UvrABC system protein B, found in Streptococcus pneumoniae serotype 19F (strain G54).